The following is a 446-amino-acid chain: tRNA-2-methylthio-N(6)-dimethylallyladenosine synthase (446 aa).

In terms of domain architecture, MTTase N-terminal spans 3–120; it reads QKLFIKTYGC…LPEMVNSVAH (118 aa). Positions 12, 49, 83, 157, 161, and 164 each coordinate [4Fe-4S] cluster. Residues 143–375 form the Radical SAM core domain; it reads SSEGASAFVS…QQRILQFAQD (233 aa). A TRAM domain is found at 378–442; sequence RKMVGSTQRI…PNSLRGERVD (65 aa).

This sequence belongs to the methylthiotransferase family. MiaB subfamily. As to quaternary structure, monomer. Requires [4Fe-4S] cluster as cofactor.

It localises to the cytoplasm. The catalysed reaction is N(6)-dimethylallyladenosine(37) in tRNA + (sulfur carrier)-SH + AH2 + 2 S-adenosyl-L-methionine = 2-methylsulfanyl-N(6)-dimethylallyladenosine(37) in tRNA + (sulfur carrier)-H + 5'-deoxyadenosine + L-methionine + A + S-adenosyl-L-homocysteine + 2 H(+). Functionally, catalyzes the methylthiolation of N6-(dimethylallyl)adenosine (i(6)A), leading to the formation of 2-methylthio-N6-(dimethylallyl)adenosine (ms(2)i(6)A) at position 37 in tRNAs that read codons beginning with uridine. The protein is tRNA-2-methylthio-N(6)-dimethylallyladenosine synthase of Hahella chejuensis (strain KCTC 2396).